Consider the following 264-residue polypeptide: 14-3-3-like protein GF14-A (264 aa).

The disordered stretch occupies residues 245 to 264 (DMQDDGGDEMRDATKPEDEH). Over residues 252 to 264 (DEMRDATKPEDEH) the composition is skewed to basic and acidic residues.

The protein belongs to the 14-3-3 family.

Functionally, is associated with a DNA binding complex that binds to the G box, a well-characterized cis-acting DNA regulatory element found in plant genes. In Oryza sativa subsp. japonica (Rice), this protein is 14-3-3-like protein GF14-A (GF14A).